The following is a 438-amino-acid chain: V-type ATP synthase beta chain (438 aa).

The protein belongs to the ATPase alpha/beta chains family.

Produces ATP from ADP in the presence of a proton gradient across the membrane. The V-type beta chain is a regulatory subunit. This Chlamydia trachomatis serovar L2b (strain UCH-1/proctitis) protein is V-type ATP synthase beta chain.